A 281-amino-acid chain; its full sequence is Diaminopimelate epimerase (281 aa).

Positions 13 and 66 each coordinate substrate. Cys75 serves as the catalytic Proton donor. Substrate-binding positions include 76–77 (GN), Asn164, Asn197, and 215–216 (ER). Cys224 (proton acceptor) is an active-site residue. Substrate is bound at residue 225–226 (GT).

It belongs to the diaminopimelate epimerase family. As to quaternary structure, homodimer.

It is found in the cytoplasm. The enzyme catalyses (2S,6S)-2,6-diaminopimelate = meso-2,6-diaminopimelate. It functions in the pathway amino-acid biosynthesis; L-lysine biosynthesis via DAP pathway; DL-2,6-diaminopimelate from LL-2,6-diaminopimelate: step 1/1. Functionally, catalyzes the stereoinversion of LL-2,6-diaminopimelate (L,L-DAP) to meso-diaminopimelate (meso-DAP), a precursor of L-lysine and an essential component of the bacterial peptidoglycan. In Picosynechococcus sp. (strain ATCC 27264 / PCC 7002 / PR-6) (Agmenellum quadruplicatum), this protein is Diaminopimelate epimerase.